A 77-amino-acid chain; its full sequence is uncharacterized protein (77 aa).

Positions 1–10 (MFNNKGRRNV) are enriched in basic residues. The segment at 1 to 21 (MFNNKGRRNVRNNEVRRNVPV) is disordered. Positions 11–21 (RNNEVRRNVPV) are enriched in basic and acidic residues. One can recognise a TRAM domain in the interval 20–77 (PVKEGETYTVTIEDMGRGGDGIARVEGFVVFVPETQKGETVNVKITAVKSKFAFAEKI).

This is an uncharacterized protein from Methanocaldococcus jannaschii (strain ATCC 43067 / DSM 2661 / JAL-1 / JCM 10045 / NBRC 100440) (Methanococcus jannaschii).